Consider the following 1412-residue polypeptide: DNA-directed RNA polymerase subunit beta' (1412 aa).

4 residues coordinate Zn(2+): Cys-70, Cys-72, Cys-85, and Cys-88. Mg(2+)-binding residues include Asp-460, Asp-462, and Asp-464. Cys-819, Cys-893, Cys-900, and Cys-903 together coordinate Zn(2+). Positions 1392-1412 (EEAFEFGTPSTPAEEPQHPAE) are disordered.

Belongs to the RNA polymerase beta' chain family. As to quaternary structure, the RNAP catalytic core consists of 2 alpha, 1 beta, 1 beta' and 1 omega subunit. When a sigma factor is associated with the core the holoenzyme is formed, which can initiate transcription. Mg(2+) is required as a cofactor. It depends on Zn(2+) as a cofactor.

The catalysed reaction is RNA(n) + a ribonucleoside 5'-triphosphate = RNA(n+1) + diphosphate. Its function is as follows. DNA-dependent RNA polymerase catalyzes the transcription of DNA into RNA using the four ribonucleoside triphosphates as substrates. This Burkholderia thailandensis (strain ATCC 700388 / DSM 13276 / CCUG 48851 / CIP 106301 / E264) protein is DNA-directed RNA polymerase subunit beta'.